A 691-amino-acid polypeptide reads, in one-letter code: Ubiquitin-like domain-containing protein CIP73 (691 aa).

Positions 22–97 (IEIKIKMLDS…LHLVARHPDL (76 aa)) constitute a Ubiquitin-like domain. Disordered stretches follow at residues 92 to 118 (ARHPDLTPPGSLPNHSATEPNSSTGHG), 176 to 203 (TGLGRTSDFTGNPSRPQPEQAGFRISSD), 264 to 283 (RNEERGFVSSRLSSTPEGLS), 432 to 473 (ASTT…ASIA), 499 to 554 (SVNT…SSRV), 590 to 624 (EIHVEDPSSQGTTAGVTSAATSSGAAQAPEAEPNV), and 645 to 691 (HIGR…QKME). Composition is skewed to polar residues over residues 104–118 (PNHSATEPNSSTGHG), 178–189 (LGRTSDFTGNPS), 273–283 (SRLSSTPEGLS), 446–465 (TQSASVQRNTGESSVNQTTS), and 499–523 (SVNTNNEQGSQPASQQHTAPHSTAE). Residues 525–535 (TLHRQSMEDSA) show a composition bias toward basic and acidic residues. Positions 536–554 (RNGTLPTPNTQQEPSSSRV) are enriched in polar residues. The segment covering 597–617 (SSQGTTAGVTSAATSSGAAQA) has biased composition (low complexity).

In terms of assembly, interacts with CCAMK. Post-translationally, phosphorylated at the N-terminus by CCAMK. Highly epressed in roots. Expressed at very low levels in leaves and stems.

Its subcellular location is the nucleus. Functionally, involved in root nodulation. Required for root nodule organogenesis after infection by symbiotic rhizobia. Probably not involved in arbuscular mycorrhizal (AM) symbiosis. Acts downstream of CCAMK. This is Ubiquitin-like domain-containing protein CIP73 from Lotus japonicus (Lotus corniculatus var. japonicus).